The sequence spans 398 residues: S-adenosylmethionine synthase (398 aa).

His17 contributes to the ATP binding site. Residue Asp19 participates in Mg(2+) binding. Glu45 is a binding site for K(+). Glu58 and Gln101 together coordinate L-methionine. The tract at residues Gln101–Lys111 is flexible loop. ATP is bound by residues Asp176–Lys178, Arg243–Phe244, Asp252, Arg258–Lys259, and Lys279. Asp252 contacts L-methionine. Lys283 lines the L-methionine pocket.

This sequence belongs to the AdoMet synthase family. In terms of assembly, homotetramer; dimer of dimers. The cofactor is Mg(2+). It depends on K(+) as a cofactor.

Its subcellular location is the cytoplasm. It carries out the reaction L-methionine + ATP + H2O = S-adenosyl-L-methionine + phosphate + diphosphate. It functions in the pathway amino-acid biosynthesis; S-adenosyl-L-methionine biosynthesis; S-adenosyl-L-methionine from L-methionine: step 1/1. Functionally, catalyzes the formation of S-adenosylmethionine (AdoMet) from methionine and ATP. The overall synthetic reaction is composed of two sequential steps, AdoMet formation and the subsequent tripolyphosphate hydrolysis which occurs prior to release of AdoMet from the enzyme. In Staphylococcus haemolyticus (strain JCSC1435), this protein is S-adenosylmethionine synthase.